The primary structure comprises 360 residues: MAAAVTAAVSLPYSNSTSLPIRTSIVAPERLVFKKVSLNNVSISGRVGTIRAQVTTEAPAKVVKHSKKQDENIVVNKFKPKEPYVGRCLLNTKITGDDAPGETWHMVFSTEGEVPYREGQSIGIVPDGIDKNGKPHKLRLYSIASSAIGDFGDSKTVSLCVKRLVYTNDAGEVVKGVCSNFLCDLKPGSEVKITGPVGKEMLMPKDPNATVIMLGTGTGIAPFRSFLWKMFFEKHEDYQFNGLAWLFLGVPTSSSLLYKEEFEKMKEKAPENFRLDFAVSREQVNDKGEKMYIQTRMAQYAEELWELLKKDNTFVYMCGLKGMEKGIDDIMVSLAAKDGIDWIEYKRTLKKAEQWNVEVY.

The transit peptide at methionine 1–alanine 52 directs the protein to the chloroplast. One can recognise an FAD-binding FR-type domain in the interval lysine 81–methionine 203. FAD is bound by residues arginine 139–serine 142, cysteine 160–lysine 162, tyrosine 166, valine 177–serine 179, and threonine 218. The NADP(+) site is built by serine 142 and lysine 162. NADP(+) is bound by residues threonine 218, valine 250–proline 251, serine 280–arginine 281, lysine 290, glycine 319–leucine 320, and glutamate 358.

It belongs to the ferredoxin--NADP reductase type 1 family. In terms of assembly, monomer. Interacts with TIC62 (via C-terminus). FAD is required as a cofactor.

Its subcellular location is the plastid. The protein localises to the chloroplast stroma. It localises to the chloroplast thylakoid membrane. The enzyme catalyses 2 reduced [2Fe-2S]-[ferredoxin] + NADP(+) + H(+) = 2 oxidized [2Fe-2S]-[ferredoxin] + NADPH. It functions in the pathway energy metabolism; photosynthesis. In terms of biological role, may play a key role in regulating the relative amounts of cyclic and non-cyclic electron flow to meet the demands of the plant for ATP and reducing power. The polypeptide is Ferredoxin--NADP reductase, leaf isozyme, chloroplastic (PETH) (Pisum sativum (Garden pea)).